A 308-amino-acid chain; its full sequence is MMDLGLSLGLGLASQGSLTSSTTTTSSPGAGSSSPWAAALNSIVGDVRRDQAAAHAAAAVGVGVGGEEMYQGRASTSPDSAAALSSASGKRERELERSGSGVDDDDGADGAGGRKKLRLSKDQAAVLEECFKTHSTLNPKQKVALANRLGLRPRQVEVWFQNRRARTKLKQTEVDCEYLKRWCERLADENKRLEKELADLRALKAAPSPASASAMQPSSSAAATLTMCPSCRRVATAGAPHQPNHQQCHPKSNTTISSSSTAAAAVAVAGGNVLPSHCQFFPAAAAAADRTSQSTWNAAAPLVTRELF.

Disordered regions lie at residues 15–36 (QGSL…SSPW) and 71–117 (QGRA…RKKL). Residues 74–88 (ASTSPDSAAALSSAS) are compositionally biased toward low complexity. Positions 112-171 (GGRKKLRLSKDQAAVLEECFKTHSTLNPKQKVALANRLGLRPRQVEVWFQNRRARTKLKQ) form a DNA-binding region, homeobox. The segment at 170–214 (KQTEVDCEYLKRWCERLADENKRLEKELADLRALKAAPSPASASA) is leucine-zipper.

It belongs to the HD-ZIP homeobox family. Class II subfamily. Homodimer. May form a heterodimer with HOX1, HOX3 or HOX7. Expressed in seedlings, roots, leaves, nodes, internodes, flowers and embryo.

It is found in the nucleus. Its function is as follows. Probable transcription factor that binds to the DNA sequence 5'-CAAT[GC]ATTG-3'. This is Homeobox-leucine zipper protein HOX2 (HOX2) from Oryza sativa subsp. indica (Rice).